The primary structure comprises 314 residues: Endo-beta-N-acetylglucosaminidase (314 aa).

An N-terminal signal peptide occupies residues 1 to 47 (MQFGIVAAIADGGRTARAGGSVRPPRRPPASHTAWGLPRGRPTGQPH). The tract at residues 14–54 (RTARAGGSVRPPRRPPASHTAWGLPRGRPTGQPHATPTKSG) is disordered. A GH18 domain is found at 55-309 (PTSIAYVEVN…SSMTKVLYGQ (255 aa)). Glu-175 serves as the catalytic Proton donor.

This sequence belongs to the glycosyl hydrolase 18 family. In terms of assembly, monomer.

Its subcellular location is the secreted. It carries out the reaction an N(4)-(oligosaccharide-(1-&gt;3)-[oligosaccharide-(1-&gt;6)]-beta-D-Man-(1-&gt;4)-beta-D-GlcNAc-(1-&gt;4)-alpha-D-GlcNAc)-L-asparaginyl-[protein] + H2O = an oligosaccharide-(1-&gt;3)-[oligosaccharide-(1-&gt;6)]-beta-D-Man-(1-&gt;4)-D-GlcNAc + N(4)-(N-acetyl-beta-D-glucosaminyl)-L-asparaginyl-[protein]. Cleaves asparagine-linked oligomannose and hybrid, but not complex, oligosaccharides from glycoproteins. This Flavobacterium sp. (strain SK1022) protein is Endo-beta-N-acetylglucosaminidase.